We begin with the raw amino-acid sequence, 391 residues long: Nuclear hormone receptor family member nhr-218 (391 aa).

Positions 17 to 93 form a DNA-binding region, nuclear receptor; the sequence is PIPCQICTYQ…MGMKAEKIQQ (77 aa). 2 NR C4-type zinc fingers span residues 20–40 and 56–76; these read CQICTYQSHGVNFNVMTCRAC and CKTRKNDCRIDSTERHFCRLC. Positions 146-391 constitute an NR LBD domain; the sequence is SRNYSDSPLT…DNFCNLFAMK (246 aa).

Belongs to the nuclear hormone receptor family.

It localises to the nucleus. Its function is as follows. Orphan nuclear receptor. This chain is Nuclear hormone receptor family member nhr-218 (nhr-218), found in Caenorhabditis elegans.